Consider the following 283-residue polypeptide: Prolyl 4-hydroxylase 1 (283 aa).

Over 1–6 (MAPAMK) the chain is Cytoplasmic. A helical; Signal-anchor for type II membrane protein membrane pass occupies residues 7-27 (IVFGLLTFVTVGMVIGSLLQL). The Lumenal segment spans residues 28–283 (AFINRLEDSY…TKWMRQKATS (256 aa)). The region spanning 162 to 279 (NGELIQVLRY…KWSATKWMRQ (118 aa)) is the Fe2OG dioxygenase domain. Residues His-180, Asp-182, and His-260 each contribute to the Fe cation site. Residue Lys-270 coordinates 2-oxoglutarate.

Belongs to the P4HA family. Requires Fe(2+) as cofactor. L-ascorbate is required as a cofactor.

It localises to the endoplasmic reticulum membrane. The catalysed reaction is L-prolyl-[collagen] + 2-oxoglutarate + O2 = trans-4-hydroxy-L-prolyl-[collagen] + succinate + CO2. Catalyzes the post-translational formation of 4-hydroxyproline in -Xaa-Pro-Gly- sequences in proline-rich peptide sequences of plant glycoproteins and other proteins. Hydroxylates preferentially prolines in second positions in the -Pro-Pro-Gly-triplets. Hydroxyprolines are important constituent of many plant cell wall glycoproteins such as extensins, hydroxyproline-rich glycoproteins, lectins and arabinogalactan proteins. Can hydroxylate collagen-like peptides and hypoxia-inducible transcription factor peptides. In Arabidopsis thaliana (Mouse-ear cress), this protein is Prolyl 4-hydroxylase 1.